Here is a 229-residue protein sequence, read N- to C-terminus: Ribonuclease 3 (229 aa).

Positions 5–134 (EQKLEQDFGI…FLGALYLDQG (130 aa)) constitute an RNase III domain. Glu-47 lines the Mg(2+) pocket. Asp-51 is an active-site residue. 2 residues coordinate Mg(2+): Asp-120 and Glu-123. The active site involves Glu-123. A DRBM domain is found at 160 to 229 (DYKTALQERL…AKSALEQLGN (70 aa)).

The protein belongs to the ribonuclease III family. Homodimer. Mg(2+) serves as cofactor.

It is found in the cytoplasm. The catalysed reaction is Endonucleolytic cleavage to 5'-phosphomonoester.. Functionally, digests double-stranded RNA. Involved in the processing of primary rRNA transcript to yield the immediate precursors to the large and small rRNAs (23S and 16S). Also processes some mRNAs, and tRNAs when they are encoded in the rRNA operon. In terms of biological role, CRISPR (clustered regularly interspaced short palindromic repeat) is an adaptive immune system that provides protection against mobile genetic elements (viruses, transposable elements and conjugative plasmids). CRISPR clusters contain spacers, sequences complementary to antecedent mobile elements, and target invading nucleic acids. CRISPR clusters are transcribed and processed into CRISPR RNA (crRNA). In this organism endogenous ribonuclease 3 and Cas9 are required for correct coprocessing of pre-crRNA and the trans-encoded small RNA (tracrRNA). Cas9, crRNA and tracrRNA are required for cleavage of invading DNA. Complements pre-crRNA and tracRNA coprocessing defects in an rnc deletion in S.pyogenes strain 370. This chain is Ribonuclease 3, found in Streptococcus thermophilus (strain ATCC BAA-491 / LMD-9).